The following is a 334-amino-acid chain: Glycerol-3-phosphate dehydrogenase [NAD(P)+] (334 aa).

NADPH is bound by residues S10, W11, H31, R32, and K105. Residues K105, G136, and S138 each contribute to the sn-glycerol 3-phosphate site. An NADPH-binding site is contributed by A140. K191, D244, S254, R255, and N256 together coordinate sn-glycerol 3-phosphate. K191 serves as the catalytic Proton acceptor. NADPH is bound at residue R255. NADPH contacts are provided by V279 and E281.

This sequence belongs to the NAD-dependent glycerol-3-phosphate dehydrogenase family.

It localises to the cytoplasm. It carries out the reaction sn-glycerol 3-phosphate + NAD(+) = dihydroxyacetone phosphate + NADH + H(+). The catalysed reaction is sn-glycerol 3-phosphate + NADP(+) = dihydroxyacetone phosphate + NADPH + H(+). It functions in the pathway membrane lipid metabolism; glycerophospholipid metabolism. Catalyzes the reduction of the glycolytic intermediate dihydroxyacetone phosphate (DHAP) to sn-glycerol 3-phosphate (G3P), the key precursor for phospholipid synthesis. The sequence is that of Glycerol-3-phosphate dehydrogenase [NAD(P)+] from Chlorobium phaeobacteroides (strain BS1).